Reading from the N-terminus, the 387-residue chain is MSSIVPSMHNNRTIIIGIVAGEASGDILGAGLIRTLKKYLKKVRFFGIGGPCMQSEDMKSWYNIEELSVMGFAEIVMKLPRLLYIRRNLARRFINLKPDVFIGIDSPDFNISLENRLKKRGIRTIHYVSPSVWAWRKKRIFALKKATDNILVILPFEKKIYDHFNIPCQFIGHSLADQIPLNPNKVSARQKLGIPHDVYCLAVLPGSRIREIKMLAHDFLVCAKLLKNNFPNLEILVPLTNQTSIKKFISVASTSVKYRVLSNQSAWEIMMAADASLVTAGTATLECMLVKCPMVVAYRMHPLTFMLAKHFINIPWISLPNLLAGHELVKEFIQNNCRPENLAQTLINLLNNNNQHIVLKKKFRQLHHSIRCNADEQAAYAVLRLIK.

The protein belongs to the LpxB family.

The catalysed reaction is 2-N,3-O-bis[(3R)-3-hydroxytetradecanoyl]-alpha-D-glucosaminyl 1-phosphate + UDP-2-N,3-O-bis[(3R)-3-hydroxytetradecanoyl]-alpha-D-glucosamine = lipid A disaccharide (E. coli) + UDP + H(+). The enzyme catalyses a lipid X + a UDP-2-N,3-O-bis[(3R)-3-hydroxyacyl]-alpha-D-glucosamine = a lipid A disaccharide + UDP + H(+). It participates in glycolipid biosynthesis; lipid IV(A) biosynthesis; lipid IV(A) from (3R)-3-hydroxytetradecanoyl-[acyl-carrier-protein] and UDP-N-acetyl-alpha-D-glucosamine: step 5/6. Its function is as follows. Condensation of UDP-2,3-diacylglucosamine and 2,3-diacylglucosamine-1-phosphate to form lipid A disaccharide, a precursor of lipid A, a phosphorylated glycolipid that anchors the lipopolysaccharide to the outer membrane of the cell. This Blochmanniella pennsylvanica (strain BPEN) protein is Lipid-A-disaccharide synthase.